We begin with the raw amino-acid sequence, 176 residues long: Flavodoxin 1 (176 aa).

In terms of domain architecture, Flavodoxin-like spans 4 to 165; that stretch reads TGIFFGSDTG…RVEKWVKQVS (162 aa).

The protein belongs to the flavodoxin family. It depends on FMN as a cofactor.

Its function is as follows. Low-potential electron donor to a number of redox enzymes (Potential). Involved in the reactivation of inactive cob(II)alamin in methionine synthase. The chain is Flavodoxin 1 (fldA) from Salmonella typhimurium (strain LT2 / SGSC1412 / ATCC 700720).